Here is a 407-residue protein sequence, read N- to C-terminus: 41 kDa spicule matrix protein (407 aa).

The first 17 residues, 1 to 17 (MKGVLFIVASLVAFATG), serve as a signal peptide directing secretion. Positions 29 to 160 (SGQSCYRYFN…PGRAPVMKRQ (132 aa)) constitute a C-type lectin domain. 2 disordered regions span residues 143 to 176 (PQNP…IPQG) and 204 to 407 (IGQQ…DALA). Gly residues predominate over residues 223-369 (NQPGMGGRQP…MGGRQPGMGG (147 aa)). Residues 370–398 (QQPNNPNNPNNPNNPNNPNNPNPRFNRPR) are compositionally biased toward low complexity.

The protein belongs to the SM50 family. Expressed specifically in the micromere/primary mesenchyme cells (PMC) lineage.

It is found in the secreted. Major matrix protein of the sea urchin embryo spicule which directs crystal growth in certain orientations and inhibit growth in others. This chain is 41 kDa spicule matrix protein, found in Hemicentrotus pulcherrimus (Sea urchin).